A 270-amino-acid chain; its full sequence is 4-hydroxy-tetrahydrodipicolinate reductase (270 aa).

NAD(+) contacts are provided by residues 11 to 16 (GCQGRM) and Glu37. Position 38 (Arg38) interacts with NADP(+). NAD(+) contacts are provided by residues 101 to 103 (GTT) and 125 to 128 (ASNF). The active-site Proton donor/acceptor is His158. A (S)-2,3,4,5-tetrahydrodipicolinate-binding site is contributed by His159. The active-site Proton donor is the Lys162. A (S)-2,3,4,5-tetrahydrodipicolinate-binding site is contributed by 168 to 169 (GT).

Belongs to the DapB family.

It localises to the cytoplasm. It catalyses the reaction (S)-2,3,4,5-tetrahydrodipicolinate + NAD(+) + H2O = (2S,4S)-4-hydroxy-2,3,4,5-tetrahydrodipicolinate + NADH + H(+). The catalysed reaction is (S)-2,3,4,5-tetrahydrodipicolinate + NADP(+) + H2O = (2S,4S)-4-hydroxy-2,3,4,5-tetrahydrodipicolinate + NADPH + H(+). The protein operates within amino-acid biosynthesis; L-lysine biosynthesis via DAP pathway; (S)-tetrahydrodipicolinate from L-aspartate: step 4/4. Functionally, catalyzes the conversion of 4-hydroxy-tetrahydrodipicolinate (HTPA) to tetrahydrodipicolinate. The sequence is that of 4-hydroxy-tetrahydrodipicolinate reductase from Tolumonas auensis (strain DSM 9187 / NBRC 110442 / TA 4).